Here is a 431-residue protein sequence, read N- to C-terminus: NADH-quinone oxidoreductase subunit D 2 (431 aa).

The segment at 1–37 (MSEAKGVGGIDPRATPGSAGAGERPPMGTLSPRAGEG) is disordered.

The protein belongs to the complex I 49 kDa subunit family. In terms of assembly, NDH-1 is composed of 14 different subunits. Subunits NuoB, C, D, E, F, and G constitute the peripheral sector of the complex.

It localises to the cell inner membrane. The enzyme catalyses a quinone + NADH + 5 H(+)(in) = a quinol + NAD(+) + 4 H(+)(out). NDH-1 shuttles electrons from NADH, via FMN and iron-sulfur (Fe-S) centers, to quinones in the respiratory chain. The immediate electron acceptor for the enzyme in this species is believed to be ubiquinone. Couples the redox reaction to proton translocation (for every two electrons transferred, four hydrogen ions are translocated across the cytoplasmic membrane), and thus conserves the redox energy in a proton gradient. The chain is NADH-quinone oxidoreductase subunit D 2 from Anaeromyxobacter sp. (strain K).